Reading from the N-terminus, the 148-residue chain is MPITLLGPRLADPGTEFVYHGPADDCEGCPYRQQCLNLTEGVRYEVTDVREGGQVLDCAVHDEGAVAVDVEPTTIPATVPSKGAYAGSKGKLAGPCPHTECPSHEFCEPAGASFDTEYQIAEIDGEPPHDHCALDRDLTLVEFAPAER.

It belongs to the UPF0179 family.

The chain is UPF0179 protein VNG_1401C from Halobacterium salinarum (strain ATCC 700922 / JCM 11081 / NRC-1) (Halobacterium halobium).